Here is a 101-residue protein sequence, read N- to C-terminus: Phosphoribosyl-AMP cyclohydrolase (101 aa).

Asp71 lines the Mg(2+) pocket. Cys72 contributes to the Zn(2+) binding site. Asp73 and Asp75 together coordinate Mg(2+). 2 residues coordinate Zn(2+): Cys88 and Cys95.

The protein belongs to the PRA-CH family. Homodimer. Mg(2+) serves as cofactor. It depends on Zn(2+) as a cofactor.

The protein localises to the cytoplasm. It carries out the reaction 1-(5-phospho-beta-D-ribosyl)-5'-AMP + H2O = 1-(5-phospho-beta-D-ribosyl)-5-[(5-phospho-beta-D-ribosylamino)methylideneamino]imidazole-4-carboxamide. Its pathway is amino-acid biosynthesis; L-histidine biosynthesis; L-histidine from 5-phospho-alpha-D-ribose 1-diphosphate: step 3/9. Functionally, catalyzes the hydrolysis of the adenine ring of phosphoribosyl-AMP. This Bacillus cereus (strain G9842) protein is Phosphoribosyl-AMP cyclohydrolase.